Consider the following 139-residue polypeptide: Large ribosomal subunit protein uL16 (139 aa).

The segment covering 1–16 (MLIPKRTKYRKQHRPV) has biased composition (basic residues). Positions 1-22 (MLIPKRTKYRKQHRPVRSGMSK) are disordered.

This sequence belongs to the universal ribosomal protein uL16 family. Part of the 50S ribosomal subunit.

In terms of biological role, binds 23S rRNA and is also seen to make contacts with the A and possibly P site tRNAs. The sequence is that of Large ribosomal subunit protein uL16 from Bifidobacterium longum (strain DJO10A).